A 222-amino-acid chain; its full sequence is MMEGYYIIENPGVVPAERRFRMKDLKAWGYDLHLGTIEGERAYFVSKVGERREGEKYQVGGKEYYIEETQKDIPGNARLLARIVIERGNPYLEFWLEEEDTKFPLAKEDPRIILKRIWEKEKLNQLLKHVRAIGLTTDFYKDNVFIKSIPLPYEEYPPKVRRVLREVRDIHRDLTGFGRFVFQYFGEVEKAHNYRLHWTLPTLHLFDVDIANEVDKILGMLD.

The protein belongs to the UPF0128 family.

The polypeptide is UPF0128 protein PYRAB08320 (Pyrococcus abyssi (strain GE5 / Orsay)).